A 418-amino-acid polypeptide reads, in one-letter code: Putative F-box protein At1g20795 (418 aa).

The 46-residue stretch at 1–46 (METLGLPLPLFEKILFRLDPISLVMMKCTRRSFNSHISEDPYFKSK) folds into the F-box domain.

The chain is Putative F-box protein At1g20795 from Arabidopsis thaliana (Mouse-ear cress).